Here is a 445-residue protein sequence, read N- to C-terminus: Phosphoglucosamine mutase (445 aa).

The active-site Phosphoserine intermediate is serine 102. Mg(2+) contacts are provided by serine 102, aspartate 241, aspartate 243, and aspartate 245. Serine 102 is modified (phosphoserine).

This sequence belongs to the phosphohexose mutase family. Requires Mg(2+) as cofactor. Activated by phosphorylation.

The enzyme catalyses alpha-D-glucosamine 1-phosphate = D-glucosamine 6-phosphate. In terms of biological role, catalyzes the conversion of glucosamine-6-phosphate to glucosamine-1-phosphate. This chain is Phosphoglucosamine mutase, found in Escherichia coli O139:H28 (strain E24377A / ETEC).